The sequence spans 66 residues: Large ribosomal subunit protein bL35 (66 aa).

Basic residues predominate over residues 1–16 (MPKQKTHRASAKRFKR). The interval 1 to 21 (MPKQKTHRASAKRFKRTGSGG) is disordered.

It belongs to the bacterial ribosomal protein bL35 family.

The sequence is that of Large ribosomal subunit protein bL35 from Streptococcus sanguinis (strain SK36).